The following is a 133-amino-acid chain: Small ribosomal subunit protein eS8 (133 aa).

Positions 1–22 are disordered; it reads MGFYQGPDNRKITGGLKGKHRD.

Belongs to the eukaryotic ribosomal protein eS8 family. In terms of assembly, part of the 30S ribosomal subunit.

The sequence is that of Small ribosomal subunit protein eS8 from Saccharolobus islandicus (strain M.14.25 / Kamchatka #1) (Sulfolobus islandicus).